Reading from the N-terminus, the 134-residue chain is Probable glycine cleavage system H protein (134 aa).

The Lipoyl-binding domain maps to 29 to 110; sequence TVLVGITDYA…PYGAWIAKIK (82 aa). Lys70 bears the N6-lipoyllysine mark.

This sequence belongs to the GcvH family. In terms of assembly, the glycine cleavage system is composed of four proteins: P, T, L and H. (R)-lipoate is required as a cofactor.

In terms of biological role, the glycine cleavage system catalyzes the degradation of glycine. The H protein shuttles the methylamine group of glycine from the P protein to the T protein. The polypeptide is Probable glycine cleavage system H protein (Pyrococcus horikoshii (strain ATCC 700860 / DSM 12428 / JCM 9974 / NBRC 100139 / OT-3)).